Here is a 344-residue protein sequence, read N- to C-terminus: Heat-inducible transcription repressor HrcA (344 aa).

Belongs to the HrcA family.

Its function is as follows. Negative regulator of class I heat shock genes (grpE-dnaK-dnaJ and groELS operons). Prevents heat-shock induction of these operons. The polypeptide is Heat-inducible transcription repressor HrcA (Streptococcus pneumoniae (strain Taiwan19F-14)).